The sequence spans 272 residues: ATP synthase subunit a (272 aa).

The next 6 helical transmembrane spans lie at 42–62 (IDSL…AGFV), 108–128 (FVWI…LPCI), 140–162 (ILPS…LMIF), 177–197 (LIYH…LEII), 219–239 (LIFI…LSVP), and 241–261 (AIFH…LTII).

This sequence belongs to the ATPase A chain family. As to quaternary structure, F-type ATPases have 2 components, CF(1) - the catalytic core - and CF(0) - the membrane proton channel. CF(1) has five subunits: alpha(3), beta(3), gamma(1), delta(1), epsilon(1). CF(0) has three main subunits: a(1), b(2) and c(9-12). The alpha and beta chains form an alternating ring which encloses part of the gamma chain. CF(1) is attached to CF(0) by a central stalk formed by the gamma and epsilon chains, while a peripheral stalk is formed by the delta and b chains.

The protein resides in the cell inner membrane. Key component of the proton channel; it plays a direct role in the translocation of protons across the membrane. This Blochmanniella floridana protein is ATP synthase subunit a.